The chain runs to 101 residues: Small ribosomal subunit protein uS10 (101 aa).

It belongs to the universal ribosomal protein uS10 family. As to quaternary structure, part of the 30S ribosomal subunit.

In terms of biological role, involved in the binding of tRNA to the ribosomes. The polypeptide is Small ribosomal subunit protein uS10 (Rhodococcus erythropolis (strain PR4 / NBRC 100887)).